Reading from the N-terminus, the 487-residue chain is Aspyridones efflux protein apdF (487 aa).

Residues 1–21 are compositionally biased toward basic and acidic residues; sequence MSSVRESSKDESIVHPPKAPE. Residues 1–25 are disordered; that stretch reads MSSVRESSKDESIVHPPKAPESEPF. The helical transmembrane segment at 35 to 55 threads the bilayer; it reads VALGAGGVLFCTFGYVNAFGV. Asn-67 is a glycosylation site (N-linked (GlcNAc...) asparagine). Helical transmembrane passes span 75–95, 99–119, 126–146, 159–179, 191–211, 234–254, 262–282, and 293–313; these read WIGSVQTFFLFGSGLVGGPLF, GAKVIWAPAVLVIFSVMMTSL, FFLAQGILGGMSMGLSLAPAL, AAMGITIAGSSLGGVIFPIAL, WAVRIVGFIILGVMSFAVLGI, VATLTAVFFLNVGIFTPFFYL, GMSTGLAFYLIAIQNASSFFG, and IGPYNMLSTVSIITAIITFCW. Residue Asn-319 is glycosylated (N-linked (GlcNAc...) asparagine). 3 consecutive transmembrane segments (helical) span residues 322 to 342, 354 to 374, and 385 to 405; these read IIVFSVLYGFFSGGIIGITPA, IGTYIGMGMAVMSVATLIGPP, and GFLQVQIFSAAVMMFGGVLAF.

The protein belongs to the major facilitator superfamily. Monocarboxylate porter (TC 2.A.1.13) family.

The protein localises to the cell membrane. Functionally, efflux pump that may be involved in the secretion of aspyridones. In Emericella nidulans (strain FGSC A4 / ATCC 38163 / CBS 112.46 / NRRL 194 / M139) (Aspergillus nidulans), this protein is Aspyridones efflux protein apdF.